The primary structure comprises 156 residues: Ribosome-binding factor A (156 aa).

Residues 124-156 are disordered; it reads TRAEYAGEAQPYRLEEEPEGSGDEVPPPGGDQR.

Belongs to the RbfA family. In terms of assembly, monomer. Binds 30S ribosomal subunits, but not 50S ribosomal subunits or 70S ribosomes.

The protein localises to the cytoplasm. One of several proteins that assist in the late maturation steps of the functional core of the 30S ribosomal subunit. Associates with free 30S ribosomal subunits (but not with 30S subunits that are part of 70S ribosomes or polysomes). Required for efficient processing of 16S rRNA. May interact with the 5'-terminal helix region of 16S rRNA. The polypeptide is Ribosome-binding factor A (Salinispora tropica (strain ATCC BAA-916 / DSM 44818 / JCM 13857 / NBRC 105044 / CNB-440)).